We begin with the raw amino-acid sequence, 1229 residues long: Receptor-type adenylate cyclase GRESAG 4.3 (1229 aa).

The Cytoplasmic portion of the chain corresponds to 1-24 (MIARVCRLTKHSKPPHLPITLTTP). Residues 25–45 (TLFLVVLVLLQLHPICVLVNV) traverse the membrane as a helical segment. At 46 to 845 (DDGGGVTVKA…PNGNALTPAQ (800 aa)) the chain is on the extracellular side. Asn-77, Asn-84, Asn-626, Asn-693, and Asn-768 each carry an N-linked (GlcNAc...) asparagine glycan. A helical transmembrane segment spans residues 846–866 (LAGVVGGSLFVVALAICLSVL). The Cytoplasmic portion of the chain corresponds to 867-1229 (ACFTLRGTRD…SNDLSDMIRV (363 aa)). Residues 889-1043 (TLIFTDIESS…RTSNMAARTE (155 aa)) form the Guanylate cyclase domain. Mg(2+) contacts are provided by Asp-894 and Asp-937.

The protein belongs to the adenylyl cyclase class-3 family. It depends on Mg(2+) as a cofactor.

The protein localises to the membrane. The enzyme catalyses ATP = 3',5'-cyclic AMP + diphosphate. Its function is as follows. Could act as a receptor for an unknown ligand. The polypeptide is Receptor-type adenylate cyclase GRESAG 4.3 (GRESAG 4.3) (Trypanosoma brucei brucei).